Here is a 540-residue protein sequence, read N- to C-terminus: Zinc finger protein 768 (540 aa).

2 disordered regions span residues 1 to 166 (MERE…FEAQ) and 239 to 258 (TGAL…GQGP). S17, S18, and S23 each carry phosphoserine. A Phosphotyrosine modification is found at Y27. Phosphoserine is present on S33. The segment covering 34–53 (ENEEEEISQQEGSGDYEVEE) has biased composition (acidic residues). A phosphoserine mark is found at S62, S69, S76, S83, S90, S97, S104, S107, S111, S118, and S125. Residues 62-77 (SPGFEPQSPEFEPQSP) show a composition bias toward low complexity. Over residues 107-119 (SDSQSPEFESQSP) the composition is skewed to polar residues. At Y128 the chain carries Phosphotyrosine. S132 bears the Phosphoserine mark. Residue Y135 is modified to Phosphotyrosine. A Phosphoserine modification is found at S139. At Y142 the chain carries Phosphotyrosine. 2 positions are modified to phosphoserine: S144 and S147. Polar residues predominate over residues 149–166 (YESQNTELKTQSPEFEAQ). At T158 the chain carries Phosphothreonine. S160 is modified (phosphoserine). The segment at 261–283 (NICGICGKSFGRGSTLIQHQRIH) adopts a C2H2-type 1 zinc-finger fold. T284 carries the post-translational modification Phosphothreonine. Phosphotyrosine is present on Y289. C2H2-type zinc fingers lie at residues 289–311 (YKCE…QRTH), 317–339 (YKCP…QRTH), 345–367 (YKCP…QRTH), and 373–395 (YSCT…QRVH). 2 positions are modified to phosphoserine: S295 and S299. T396 carries the phosphothreonine modification. C2H2-type zinc fingers lie at residues 401–423 (FSCG…ARSH), 429–451 (FKCP…ARTH), 457–479 (YSCP…QRSH), 485–507 (YRCA…HRVH), and 513–535 (YKCD…QRTH). The residue at position 442 (S442) is a Phosphoserine.

The protein belongs to the krueppel C2H2-type zinc-finger protein family. In terms of assembly, interacts (via zinc-finger domains) with TP53 (via N-terminus); interaction might be facilitated by TP53 oligomerization state. Interacts with ELP3. May be phosphorylated at residue 'Ser-5' of the tandem heptapeptide repeats in the N-terminus. Phosphorylation might be increased upon RAS pathway activation and negatively regulate protein stability.

It is found in the nucleus. The protein localises to the chromosome. Functionally, binds to mammalian-wide interspersed repeat (MIRs) sequences in euchromatin and promoter regions of genes at the consensus sequence 5'-GCTGTGTG-[N20]-CCTCTCTG-3', consisting of two anchor regions connected by a linker region; the linker region probably does not contribute to the binding specificity. Required for cell homeostasis. May be involved in transcriptional regulation. The polypeptide is Zinc finger protein 768 (ZNF768) (Homo sapiens (Human)).